Consider the following 733-residue polypeptide: Wall-associated receptor kinase 5 (733 aa).

An N-terminal signal peptide occupies residues 1–23 (MKVHSLFLMAIFFYLAYTQLVKA). The Extracellular segment spans residues 24–330 (QPRDDCQTRC…IDTPKEEPKY (307 aa)). N-linked (GlcNAc...) asparagine glycans are attached at residues Asn-57, Asn-77, Asn-110, Asn-137, Asn-184, Asn-206, Asn-218, Asn-232, and Asn-247. Positions 231 to 278 (GNQTCEQVVGRNICGGNSTCFDSTRGKGYNCKCLQGFDGNPYLSDGCQ) constitute an EGF-like 1 domain. Disulfide bonds link Cys-235–Cys-250, Cys-244–Cys-261, Cys-263–Cys-277, Cys-283–Cys-296, Cys-290–Cys-305, and Cys-307–Cys-320. The region spanning 279–321 (DINECTTRIHNCSDTSTCENTLGSFHCQCPSGSDLNTTTMSCI) is the EGF-like 2; calcium-binding domain. Asn-289 is a glycosylation site (N-linked (GlcNAc...) asparagine). N-linked (GlcNAc...) asparagine glycosylation occurs at Asn-314. A helical membrane pass occupies residues 331 to 351 (LGWTTVLLGTTIGFLIILLTI). Residues 352 to 733 (SYIQQKMRHR…VTRLDIETGR (382 aa)) lie on the Cytoplasmic side of the membrane. Thr-397 carries the post-translational modification Phosphothreonine. The 284-residue stretch at 408-691 (YNESRILGQG…RVKTTKHQWS (284 aa)) folds into the Protein kinase domain. ATP contacts are provided by residues 414–422 (LGQGGQGTV) and Lys-436. At Tyr-481 the chain carries Phosphotyrosine. Asp-533 (proton acceptor) is an active-site residue. Residues Thr-567 and Thr-572 each carry the phosphothreonine modification. At Tyr-580 the chain carries Phosphotyrosine.

The protein belongs to the protein kinase superfamily. Ser/Thr protein kinase family. Predominantly expressed in green tissues such as stems and leaves.

Its subcellular location is the membrane. The catalysed reaction is L-seryl-[protein] + ATP = O-phospho-L-seryl-[protein] + ADP + H(+). It catalyses the reaction L-threonyl-[protein] + ATP = O-phospho-L-threonyl-[protein] + ADP + H(+). Its function is as follows. Serine/threonine-protein kinase that may function as a signaling receptor of extracellular matrix component. Binding to pectin may have significance in the control of cell expansion, morphogenesis and development. This Arabidopsis thaliana (Mouse-ear cress) protein is Wall-associated receptor kinase 5 (WAK5).